An 89-amino-acid polypeptide reads, in one-letter code: Small ribosomal subunit protein uS15 (89 aa).

This sequence belongs to the universal ribosomal protein uS15 family. As to quaternary structure, part of the 30S ribosomal subunit. Forms a bridge to the 50S subunit in the 70S ribosome, contacting the 23S rRNA.

Its function is as follows. One of the primary rRNA binding proteins, it binds directly to 16S rRNA where it helps nucleate assembly of the platform of the 30S subunit by binding and bridging several RNA helices of the 16S rRNA. Forms an intersubunit bridge (bridge B4) with the 23S rRNA of the 50S subunit in the ribosome. This chain is Small ribosomal subunit protein uS15, found in Brucella abortus (strain S19).